We begin with the raw amino-acid sequence, 108 residues long: Ig light chain C region (108 aa).

Positions 7–102 (PTVSIYCPSL…LTPALAKSFQ (96 aa)) constitute an Ig-like domain. Disulfide bonds link Cys-13-Cys-106 and Cys-28-Cys-86.

The polypeptide is Ig light chain C region (Aquarana catesbeiana (American bullfrog)).